The sequence spans 178 residues: Large ribosomal subunit protein bL25 (178 aa).

This sequence belongs to the bacterial ribosomal protein bL25 family. CTC subfamily. In terms of assembly, part of the 50S ribosomal subunit; part of the 5S rRNA/L5/L18/L25 subcomplex. Contacts the 5S rRNA. Binds to the 5S rRNA independently of L5 and L18.

Functionally, this is one of the proteins that binds to the 5S RNA in the ribosome where it forms part of the central protuberance. In Helicobacter pylori (strain HPAG1), this protein is Large ribosomal subunit protein bL25.